The sequence spans 276 residues: Undecaprenyl-diphosphatase 2 (276 aa).

8 helical membrane-spanning segments follow: residues 1 to 21 (MSLWFLVFLSVLQGVTELFPV), 44 to 64 (QLLPFLVALHLGTAFALLWYF), 87 to 107 (GHLMWALIIGTIPAGLVGLLL), 114 to 134 (VFHDLRIVAVALIVNGILLWL), 150 to 170 (LTFKQAFFVGLAQVGALIPGF), 190 to 210 (AAEFSFLLGTPIIFAAGLLEL), 222 to 242 (DALLGGVLTAIAAYLSVRFLM), and 251 to 271 (LASFGLYCALAGLFCLGWFMF).

Belongs to the UppP family.

It localises to the cell inner membrane. It catalyses the reaction di-trans,octa-cis-undecaprenyl diphosphate + H2O = di-trans,octa-cis-undecaprenyl phosphate + phosphate + H(+). In terms of biological role, catalyzes the dephosphorylation of undecaprenyl diphosphate (UPP). Confers resistance to bacitracin. The sequence is that of Undecaprenyl-diphosphatase 2 from Burkholderia thailandensis (strain ATCC 700388 / DSM 13276 / CCUG 48851 / CIP 106301 / E264).